The sequence spans 379 residues: Isocitrate dehydrogenase [NAD] subunit 2, mitochondrial (379 aa).

The transit peptide at 1–27 (MSMLSTLRTAGSLRTFSRSACYSFQRF) directs the protein to the mitochondrion. Substrate contacts are provided by R129, R139, R160, and D247. D247, D273, and D277 together coordinate Mg(2+).

The protein belongs to the isocitrate and isopropylmalate dehydrogenases family. In terms of assembly, octamer of two non-identical subunits IDH1 and IDH2. Mg(2+) is required as a cofactor. The cofactor is Mn(2+).

It localises to the mitochondrion. It catalyses the reaction D-threo-isocitrate + NAD(+) = 2-oxoglutarate + CO2 + NADH. Performs an essential role in the oxidative function of the citric acid cycle and is involved in glutamate biosynthesis. Also binds RNA; specifically to the 5'-untranslated leaders of mitochondrial mRNAs. The polypeptide is Isocitrate dehydrogenase [NAD] subunit 2, mitochondrial (idh2) (Schizosaccharomyces pombe (strain 972 / ATCC 24843) (Fission yeast)).